A 386-amino-acid polypeptide reads, in one-letter code: MGCQFSVNSKKVRIFDTTLRDGEQAPGIDLTVEQKVKIARKLAELGVDVIEAGFPAASEGEFIATKKILEEVGDQVEVIGLSRANKQDIDKTIDTGISSIHVFIATSDIHLKYKLKMTREQVLDKIYESVRYAKDHGLIVEYSPEDATRTDKDFLLKAVSTAIEAGADRINIPDTVGVMHPFKFHDLIKDVVSVTKDKIVSVHCHNDFGLATANSIAGVMAGARQVHVTVNGIGERAGNASLEEVVMALKKLLGYEVNIKTYKLYETSRLVSELTGVPVPYFKAIVGENAFGHEAGIHVHGVIENPLTYEPISPEEVGNFRRLALGKHSGIHGLKKLLEEQGIYLNDQELREVLNEIKKLAENGEKVNVDVAKEIAIKVSSKKIKV.

In terms of domain architecture, Pyruvate carboxyltransferase spans 12 to 265 (VRIFDTTLRD…EVNIKTYKLY (254 aa)). The a divalent metal cation site is built by D21, H203, H205, and N239.

This sequence belongs to the alpha-IPM synthase/homocitrate synthase family. In terms of assembly, homodimer. A divalent metal cation is required as a cofactor.

It catalyses the reaction 3-methyl-2-oxobutanoate + acetyl-CoA + H2O = (2S)-2-isopropylmalate + CoA + H(+). It participates in amino-acid biosynthesis; L-leucine biosynthesis; L-leucine from 3-methyl-2-oxobutanoate: step 1/4. Catalyzes the condensation of the acetyl group of acetyl-CoA with 3-methyl-2-oxobutanoate (2-oxoisovalerate) to form 3-carboxy-3-hydroxy-4-methylpentanoate (2-isopropylmalate). Carries out the first step of the leucine biosynthesis pathway. The chain is 2-isopropylmalate synthase (leuA) from Sulfurisphaera tokodaii (strain DSM 16993 / JCM 10545 / NBRC 100140 / 7) (Sulfolobus tokodaii).